The sequence spans 517 residues: Cytochrome P450 78A5 (517 aa).

Residues 20–40 (AFASVSLIIATVAFLLSPGGL) form a helical membrane-spanning segment. C459 contributes to the heme binding site.

Belongs to the cytochrome P450 family. Heme serves as cofactor. As to expression, expressed in the periphery of the shoot apical meristem and inflorescence meristem, on the adaxial sides of developing floral organs and in developing ovules in the region where the integuments emerge.

Its subcellular location is the membrane. Its function is as follows. Plays a role in regulating directional growth at the meristem/organ boundary. Is required for the promotion of leaf and floral organ growth and for the prolongation of the plastochron. Promotes organ growth in a non-cell-autonomous manner and may generate a mobile growth signal distinct from the classical phytohormones that prevents premature arrest of proliferation, until the correct primordium size has been reached. Functions probably in association with CYP78A7 in regulating relative growth of the shoot apical meristem and plant organs. Is required locally in developing ovules to stimulates cell proliferation and promote seed growth. This chain is Cytochrome P450 78A5 (CYP78A5), found in Arabidopsis thaliana (Mouse-ear cress).